A 906-amino-acid polypeptide reads, in one-letter code: NACHT, LRR and PYD domains-containing protein 1b allele 4 (906 aa).

The segment at 1–22 (MEESPPKQKSNTKVAQHEGQQD) is disordered. Positions 126–435 (QLVIIEGAAG…EFFAAISCIL (310 aa)) constitute an NACHT domain. An ATP-binding site is contributed by 132–139 (GAAGIGKS). LRR repeat units follow at residues 627–647 (NLEGLDLSGNSLRYSVVQSLC) and 684–704 (SLTELYLQLNDLGDDGVRMLC). An FIIND (incomplete) domain is found at 789–906 (FWGPTGPVAT…FQEHGSRNAR (118 aa)).

Belongs to the NLRP family. In terms of tissue distribution, expressed in macrophages.

The protein localises to the cytoplasm. It is found in the cytosol. Its function is as follows. Probable inactive allele of Nlrp1b, which lacks a CARD domain, suggesting that it is not able to form an inflammasome. Contrary to Nlrp1b allele 1, allele 4 is not activated by B.anthracis lethal toxin and no other activation signal is reported. The sequence is that of NACHT, LRR and PYD domains-containing protein 1b allele 4 from Mus musculus (Mouse).